Consider the following 244-residue polypeptide: 5-oxoprolinase subunit A (244 aa).

Belongs to the LamB/PxpA family. As to quaternary structure, forms a complex composed of PxpA, PxpB and PxpC.

The catalysed reaction is 5-oxo-L-proline + ATP + 2 H2O = L-glutamate + ADP + phosphate + H(+). Its function is as follows. Catalyzes the cleavage of 5-oxoproline to form L-glutamate coupled to the hydrolysis of ATP to ADP and inorganic phosphate. The chain is 5-oxoprolinase subunit A from Escherichia coli O157:H7.